The primary structure comprises 138 residues: DNA-directed RNA polymerase subunit omega (138 aa).

Residues 104–138 form a disordered region; it reads GNSDGLENSSNSRDDNPLGRDNFFSTPENRNNTNS. The span at 126 to 138 shows a compositional bias: polar residues; it reads FFSTPENRNNTNS.

It belongs to the RNA polymerase subunit omega family. As to quaternary structure, the RNAP catalytic core consists of 2 alpha, 1 beta, 1 beta' and 1 omega subunit. When a sigma factor is associated with the core the holoenzyme is formed, which can initiate transcription.

It catalyses the reaction RNA(n) + a ribonucleoside 5'-triphosphate = RNA(n+1) + diphosphate. In terms of biological role, promotes RNA polymerase assembly. Latches the N- and C-terminal regions of the beta' subunit thereby facilitating its interaction with the beta and alpha subunits. The polypeptide is DNA-directed RNA polymerase subunit omega (Ehrlichia chaffeensis (strain ATCC CRL-10679 / Arkansas)).